Reading from the N-terminus, the 108-residue chain is Insulin (108 aa).

The N-terminal stretch at 1–23 is a signal peptide; sequence MALWILLPLLALLILWGPDPAQA. 2 cysteine pairs are disulfide-bonded: cysteine 30–cysteine 94 and cysteine 43–cysteine 107. The propeptide at 57-88 is c peptide; that stretch reads EVEDPQVGQVELGAGPGAGSEQTLALEVARQA.

The protein belongs to the insulin family. Heterodimer of a B chain and an A chain linked by two disulfide bonds.

It localises to the secreted. Its function is as follows. Insulin decreases blood glucose concentration. It increases cell permeability to monosaccharides, amino acids and fatty acids. It accelerates glycolysis, the pentose phosphate cycle, and glycogen synthesis in liver. This is Insulin (INS) from Rodentia sp.